The following is a 530-amino-acid chain: Developmental and secondary metabolism regulator VEL1 (530 aa).

Residues 26-220 (NRSLWYQMTV…ADQGCQVRIR (195 aa)) form the Velvet domain. The Nuclear localization signal signature appears at 40–45 (ERARAC). Positions 206–516 (LSKTVADQGC…HDQGWYSRAD (311 aa)) are disordered. The segment covering 244–253 (FERREEDFGR) has biased composition (basic and acidic residues). The segment covering 295 to 305 (YPPPPPPPSYE) has biased composition (pro residues). Over residues 347 to 356 (YAPTAQSPYS) the composition is skewed to polar residues. The span at 380 to 389 (VKHDLYDRRQ) shows a compositional bias: basic and acidic residues. Over residues 390–404 (STSSYVPPSPSVYST) the composition is skewed to low complexity. The segment covering 415-426 (SYPPTPVAAPRP) has biased composition (pro residues). The interval 429–460 (MHSQTSLPALKIDQLVSPVSPLPPIEPQTGPA) is PEST. Over residues 478–490 (FAQSTRPLHNGQR) the composition is skewed to polar residues.

It belongs to the velvet family. VeA subfamily. In terms of assembly, component of the heterotrimeric velvet complex composed of LAE1, VEL1 and VEL2; VEL1 acting as a bridging protein between LAE1 and VEL2. Interacts with LAE1.

Its subcellular location is the nucleus. The protein resides in the cytoplasm. In terms of biological role, component of the velvet transcription factor complex that controls sexual/asexual developmental ratio in response to light, promoting sexual development in the darkness while stimulating asexual sporulation under illumination. The velvet complex hat acts as a global regulator for secondary metabolite gene expression. Controls positively the expression of the gibberellins, fumonisins and fusarin C gene clusters. Controls the expression of the fusaric acid gene cluster. Controls negatively the expression of the bikaverin gene cluster. Regulates the expression of laeA. Plays a crucial role in virulence. The sequence is that of Developmental and secondary metabolism regulator VEL1 from Gibberella fujikuroi (strain CBS 195.34 / IMI 58289 / NRRL A-6831) (Bakanae and foot rot disease fungus).